The chain runs to 77 residues: Putative antitoxin MazE7 (77 aa).

A disordered region spans residues Arg-49–Gly-77.

As to quaternary structure, forms a complex with cognate toxin MazF7.

Functionally, antitoxin component of a type II toxin-antitoxin (TA) system. This chain is Putative antitoxin MazE7 (mazE7), found in Mycobacterium tuberculosis (strain CDC 1551 / Oshkosh).